The sequence spans 104 residues: Pyrimidine/purine nucleoside phosphorylase (104 aa).

This sequence belongs to the nucleoside phosphorylase PpnP family.

The catalysed reaction is a purine D-ribonucleoside + phosphate = a purine nucleobase + alpha-D-ribose 1-phosphate. It catalyses the reaction adenosine + phosphate = alpha-D-ribose 1-phosphate + adenine. It carries out the reaction cytidine + phosphate = cytosine + alpha-D-ribose 1-phosphate. The enzyme catalyses guanosine + phosphate = alpha-D-ribose 1-phosphate + guanine. The catalysed reaction is inosine + phosphate = alpha-D-ribose 1-phosphate + hypoxanthine. It catalyses the reaction thymidine + phosphate = 2-deoxy-alpha-D-ribose 1-phosphate + thymine. It carries out the reaction uridine + phosphate = alpha-D-ribose 1-phosphate + uracil. The enzyme catalyses xanthosine + phosphate = alpha-D-ribose 1-phosphate + xanthine. Functionally, catalyzes the phosphorolysis of diverse nucleosides, yielding D-ribose 1-phosphate and the respective free bases. Can use uridine, adenosine, guanosine, cytidine, thymidine, inosine and xanthosine as substrates. Also catalyzes the reverse reactions. The protein is Pyrimidine/purine nucleoside phosphorylase of Leptothrix cholodnii (strain ATCC 51168 / LMG 8142 / SP-6) (Leptothrix discophora (strain SP-6)).